The following is a 116-amino-acid chain: Putative iron-sulfur cluster insertion protein ErpA (116 aa).

Iron-sulfur cluster is bound by residues Cys-44, Cys-108, and Cys-110.

Belongs to the HesB/IscA family. In terms of assembly, homodimer. The cofactor is iron-sulfur cluster.

In terms of biological role, required for insertion of 4Fe-4S clusters. The polypeptide is Putative iron-sulfur cluster insertion protein ErpA (Herminiimonas arsenicoxydans).